We begin with the raw amino-acid sequence, 461 residues long: UPF0210 protein Ddes_0622 (461 aa).

Belongs to the UPF0210 family. In terms of assembly, homodimer.

This Desulfovibrio desulfuricans (strain ATCC 27774 / DSM 6949 / MB) protein is UPF0210 protein Ddes_0622.